We begin with the raw amino-acid sequence, 94 residues long: Large ribosomal subunit protein bL27 (94 aa).

The propeptide occupies 1–9; the sequence is MNLANLQLF. The disordered stretch occupies residues 11–34; that stretch reads HKKGGGSTSNGRDSQAKRLGAKAA.

It belongs to the bacterial ribosomal protein bL27 family. The N-terminus is cleaved by ribosomal processing cysteine protease Prp.

The polypeptide is Large ribosomal subunit protein bL27 (Streptococcus pyogenes serotype M3 (strain ATCC BAA-595 / MGAS315)).